Reading from the N-terminus, the 464-residue chain is UDP-N-acetylmuramate--L-alanine ligase (464 aa).

Position 112 to 118 (112 to 118 (GTHGKTT)) interacts with ATP.

The protein belongs to the MurCDEF family.

It localises to the cytoplasm. The catalysed reaction is UDP-N-acetyl-alpha-D-muramate + L-alanine + ATP = UDP-N-acetyl-alpha-D-muramoyl-L-alanine + ADP + phosphate + H(+). The protein operates within cell wall biogenesis; peptidoglycan biosynthesis. In terms of biological role, cell wall formation. In Chromobacterium violaceum (strain ATCC 12472 / DSM 30191 / JCM 1249 / CCUG 213 / NBRC 12614 / NCIMB 9131 / NCTC 9757 / MK), this protein is UDP-N-acetylmuramate--L-alanine ligase.